Reading from the N-terminus, the 72-residue chain is Translation initiation factor IF-1 (72 aa).

Residues 1–72 enclose the S1-like domain; sequence MTKEEAIEVD…SRGRIMFRER (72 aa).

The protein belongs to the IF-1 family. As to quaternary structure, component of the 30S ribosomal translation pre-initiation complex which assembles on the 30S ribosome in the order IF-2 and IF-3, IF-1 and N-formylmethionyl-tRNA(fMet); mRNA recruitment can occur at any time during PIC assembly.

It is found in the cytoplasm. One of the essential components for the initiation of protein synthesis. Stabilizes the binding of IF-2 and IF-3 on the 30S subunit to which N-formylmethionyl-tRNA(fMet) subsequently binds. Helps modulate mRNA selection, yielding the 30S pre-initiation complex (PIC). Upon addition of the 50S ribosomal subunit IF-1, IF-2 and IF-3 are released leaving the mature 70S translation initiation complex. In Treponema pallidum (strain Nichols), this protein is Translation initiation factor IF-1.